Consider the following 195-residue polypeptide: RFKKIRRLGALPGLTSKRPRSGSDLKNQLRSGKRSQYRIRLEEKQKLRFHYGLTERQLLKYVHIAGKAKGSTGQILLQLLEMRLDNILFRLGMASTIPGARQLVNHRHILVNGRIVDIPSYRCKPRDIITTKNKQRSKALIQNFIASYPHQEELPNHLTIDPFQYKGLVNQIIDSKWIGLKINELLVVEYYSRQT.

The S4 RNA-binding domain occupies 82-143 (MRLDNILFRL…KQRSKALIQN (62 aa)).

The protein belongs to the universal ribosomal protein uS4 family. As to quaternary structure, part of the 30S ribosomal subunit. Contacts protein S5. The interaction surface between S4 and S5 is involved in control of translational fidelity.

Its subcellular location is the plastid. It localises to the chloroplast. Functionally, one of the primary rRNA binding proteins, it binds directly to 16S rRNA where it nucleates assembly of the body of the 30S subunit. With S5 and S12 plays an important role in translational accuracy. The polypeptide is Small ribosomal subunit protein uS4c (rps4) (Pillansia templemannii).